We begin with the raw amino-acid sequence, 296 residues long: GTPase Era (296 aa).

Positions 7-174 (KCSMNAIVGT…INYLCEISPS (168 aa)) constitute an Era-type G domain. The tract at residues 15–22 (GTTNAGKS) is G1. 15–22 (GTTNAGKS) is a binding site for GTP. The tract at residues 41–45 (QTTRV) is G2. Positions 62-65 (DTPG) are G3. Residues 62–66 (DTPGI) and 124–127 (NKID) each bind GTP. The tract at residues 124-127 (NKID) is G4. The interval 153-155 (ISA) is G5. The 78-residue stretch at 205 to 282 (LHHELPYSLS…HLFLFVKVRE (78 aa)) folds into the KH type-2 domain.

Belongs to the TRAFAC class TrmE-Era-EngA-EngB-Septin-like GTPase superfamily. Era GTPase family. In terms of assembly, monomer.

The protein resides in the cytoplasm. It is found in the cell inner membrane. Functionally, an essential GTPase that binds both GDP and GTP, with rapid nucleotide exchange. Plays a role in 16S rRNA processing and 30S ribosomal subunit biogenesis and possibly also in cell cycle regulation and energy metabolism. The sequence is that of GTPase Era from Ehrlichia canis (strain Jake).